Reading from the N-terminus, the 748-residue chain is Catalase-peroxidase (748 aa).

A compositionally biased stretch (basic and acidic residues) spans methionine 1 to alanine 14. The tract at residues methionine 1–asparagine 40 is disordered. Residues tryptophan 112–tyrosine 239 constitute a cross-link (tryptophyl-tyrosyl-methioninium (Trp-Tyr) (with M-265)). Histidine 113 serves as the catalytic Proton acceptor. The tryptophyl-tyrosyl-methioninium (Tyr-Met) (with W-112) cross-link spans tyrosine 239 to methionine 265. Histidine 280 serves as a coordination point for heme b.

The protein belongs to the peroxidase family. Peroxidase/catalase subfamily. Homodimer or homotetramer. Requires heme b as cofactor. In terms of processing, formation of the three residue Trp-Tyr-Met cross-link is important for the catalase, but not the peroxidase activity of the enzyme.

It catalyses the reaction H2O2 + AH2 = A + 2 H2O. The enzyme catalyses 2 H2O2 = O2 + 2 H2O. In terms of biological role, bifunctional enzyme with both catalase and broad-spectrum peroxidase activity. The sequence is that of Catalase-peroxidase from Mycolicibacterium gilvum (strain PYR-GCK) (Mycobacterium gilvum (strain PYR-GCK)).